A 308-amino-acid chain; its full sequence is MSRRKVFLVGDGRVGSTFANDLLQNVRIDELVICDVVKKITEGDALDLEDLAPFVGQCTVKSGDYSDAKDADIAVITAGAARKPGMTRLDLVKTNVKILESIIKPIVESGFNGIFVVSANPVDILTTLTQKLSGFPKNKVIGTGTSLDTARLRVALSHKTGVNVDHIDAYVLGEHGDTSFENFDEAIIDHKPLRSYKELDEETLVELETDVRKKGGKIIANKGATFYGVAMCLTQICKAILENKALVMPLSAPMTGEYGIHDLYIGSPAVVTANGISDVIELHLSEDENKKMAYSAAKMKEVVDGIDL.

NAD(+) contacts are provided by residues valine 14, aspartate 35, tyrosine 65, and glycine 79–alanine 80. Arginine 88 serves as a coordination point for substrate. Serine 101 contacts NAD(+). Asparagine 120 to aspartate 123 provides a ligand contact to substrate. An NAD(+)-binding site is contributed by threonine 143. Residue aspartate 148 to arginine 151 coordinates substrate. Catalysis depends on histidine 175, which acts as the Proton acceptor. Substrate is bound at residue threonine 225.

The protein belongs to the LDH/MDH superfamily. LDH family. In terms of assembly, homotetramer.

The protein localises to the cytoplasm. It catalyses the reaction (S)-lactate + NAD(+) = pyruvate + NADH + H(+). It functions in the pathway fermentation; pyruvate fermentation to lactate; (S)-lactate from pyruvate: step 1/1. Catalyzes the conversion of lactate to pyruvate. The polypeptide is L-lactate dehydrogenase 2 (Lactobacillus johnsonii (strain CNCM I-12250 / La1 / NCC 533)).